Consider the following 120-residue polypeptide: uncharacterized protein (120 aa).

This sequence to E.coli YiaW.

This is an uncharacterized protein from Escherichia coli (strain K12).